The following is a 181-amino-acid chain: ADP-ribosylation factor 1 (181 aa).

Glycine 2 carries N-myristoyl glycine lipidation. An important for the stable binding to the membranes region spans residues 3–16 (NMFANLFKGLFGKK). Residues 24–32 (GLDAAGKTT), 126–129 (NKQD), and alanine 160 each bind GTP.

The protein belongs to the small GTPase superfamily. Arf family.

The protein resides in the golgi apparatus membrane. The enzyme catalyses GTP + H2O = GDP + phosphate + H(+). With respect to regulation, alternates between an inactive GDP-bound form and an active GTP-bound form. Activated by a guanine nucleotide-exchange factor (GEF) and inactivated by GTPase-activating protein (GAP). Functionally, small GTPase involved in protein trafficking between different compartments. Modulates vesicle budding and uncoating within the Golgi complex. In its GTP-bound form, triggers the recruitment of coatomer proteins to the Golgi membrane. The hydrolysis of ARF1-bound GTP, which is mediated by ARFGAPs proteins, is required for dissociation of coat proteins from Golgi membranes and vesicles. This Xenopus laevis (African clawed frog) protein is ADP-ribosylation factor 1 (arf1).